A 104-amino-acid polypeptide reads, in one-letter code: Large ribosomal subunit protein bL21 (104 aa).

This sequence belongs to the bacterial ribosomal protein bL21 family. Part of the 50S ribosomal subunit. Contacts protein L20.

Its function is as follows. This protein binds to 23S rRNA in the presence of protein L20. This Tropheryma whipplei (strain Twist) (Whipple's bacillus) protein is Large ribosomal subunit protein bL21.